Consider the following 442-residue polypeptide: Phosphoglucosamine mutase (442 aa).

The active-site Phosphoserine intermediate is the Ser-103. The Mg(2+) site is built by Ser-103, Asp-241, Asp-243, and Asp-245. Residue Ser-103 is modified to Phosphoserine.

This sequence belongs to the phosphohexose mutase family. The cofactor is Mg(2+). Post-translationally, activated by phosphorylation.

It carries out the reaction alpha-D-glucosamine 1-phosphate = D-glucosamine 6-phosphate. Functionally, catalyzes the conversion of glucosamine-6-phosphate to glucosamine-1-phosphate. In Deinococcus deserti (strain DSM 17065 / CIP 109153 / LMG 22923 / VCD115), this protein is Phosphoglucosamine mutase.